The primary structure comprises 371 residues: SufE-like protein 1, chloroplastic/mitochondrial (371 aa).

The N-terminal 66 residues, 1 to 66 (MAAAMSSSCC…ISTGIVPPPS (66 aa)), are a transit peptide targeting the chloroplast and mitochondrion. Catalysis depends on Cys-131, which acts as the Cysteine persulfide intermediate. At Cys-131 the chain carries S-glutathionyl cysteine. Positions 218–249 (VKGEEDSSSGESSESSFVSIPETKDEANVPEV) are disordered.

It belongs to the SufE family. In terms of assembly, heterotetramer with NFS2. Interacts with NFS2 and NIFS1. Interacts in vitro with GRXS14, GRXS15, GRXS16 and GRXS17, but not with GRXC5. Interacts in vivo only with GRXS14 and GRXS16. Glutathionylated. Glutathionylation strongly reduces the stimulation of NFS2 activity. In terms of tissue distribution, expressed in roots, leaves, stems and flowers.

The protein resides in the plastid. It localises to the chloroplast stroma. The protein localises to the mitochondrion. It participates in cofactor biosynthesis; iron-sulfur cluster biosynthesis. Functionally, participates in cysteine desulfurization mediated by NFS2 in chloroplast and NIFS1 in mitochondrion. Activates the cysteine desulfurase activity of NFS2. Cysteine desulfurization mobilizes sulfur from L-cysteine to yield L-alanine and supplies the inorganic sulfur for iron-sulfur (Fe-S) cluster formation. Glutaredoxins regulate SUFE1 activity by inducing its reduction and deglutathionylation. In Arabidopsis thaliana (Mouse-ear cress), this protein is SufE-like protein 1, chloroplastic/mitochondrial.